The sequence spans 201 residues: Anthranilate synthase component 2 (201 aa).

The region spanning 1–199 is the Glutamine amidotransferase type-1 domain; the sequence is MLLMIDNYDS…LRQQGGVRGE (199 aa). Residue 52-54 coordinates L-glutamine; sequence GPC. The active-site Nucleophile; for GATase activity is C79. Residues Q83 and 129 to 130 each bind L-glutamine; that span reads SL. Active-site for GATase activity residues include H173 and E175.

Heterotetramer consisting of two non-identical subunits: a beta subunit (TrpG) and a large alpha subunit (TrpE).

The catalysed reaction is chorismate + L-glutamine = anthranilate + pyruvate + L-glutamate + H(+). The protein operates within amino-acid biosynthesis; L-tryptophan biosynthesis; L-tryptophan from chorismate: step 1/5. In terms of biological role, part of a heterotetrameric complex that catalyzes the two-step biosynthesis of anthranilate, an intermediate in the biosynthesis of L-tryptophan. In the first step, the glutamine-binding beta subunit (TrpG) of anthranilate synthase (AS) provides the glutamine amidotransferase activity which generates ammonia as a substrate that, along with chorismate, is used in the second step, catalyzed by the large alpha subunit of AS (TrpE) to produce anthranilate. In the absence of TrpG, TrpE can synthesize anthranilate directly from chorismate and high concentrations of ammonia. The chain is Anthranilate synthase component 2 from Pseudomonas aeruginosa (strain ATCC 15692 / DSM 22644 / CIP 104116 / JCM 14847 / LMG 12228 / 1C / PRS 101 / PAO1).